The following is a 483-amino-acid chain: Rhamnulokinase (483 aa).

11–15 is an ATP binding site; the sequence is ASSGR. Residues glycine 79 and 234–236 each bind substrate; that span reads HDT. The Proton acceptor role is filled by aspartate 235. Position 257 (threonine 257) interacts with ATP. Position 294 (asparagine 294) interacts with substrate. Residue glutamine 302 participates in ATP binding. A disulfide bridge connects residues cysteine 352 and cysteine 369. Glycine 401 serves as a coordination point for ATP.

It belongs to the rhamnulokinase family. It depends on Mg(2+) as a cofactor.

It catalyses the reaction L-rhamnulose + ATP = L-rhamnulose 1-phosphate + ADP + H(+). Its pathway is carbohydrate degradation; L-rhamnose degradation; glycerone phosphate from L-rhamnose: step 2/3. In terms of biological role, involved in the catabolism of L-rhamnose (6-deoxy-L-mannose). Catalyzes the transfer of the gamma-phosphate group from ATP to the 1-hydroxyl group of L-rhamnulose to yield L-rhamnulose 1-phosphate. The sequence is that of Rhamnulokinase from Listeria innocua serovar 6a (strain ATCC BAA-680 / CLIP 11262).